A 119-amino-acid chain; its full sequence is Large ribosomal subunit protein uL18 (119 aa).

This sequence belongs to the universal ribosomal protein uL18 family. In terms of assembly, part of the 50S ribosomal subunit; part of the 5S rRNA/L5/L18/L25 subcomplex. Contacts the 5S and 23S rRNAs.

Functionally, this is one of the proteins that bind and probably mediate the attachment of the 5S RNA into the large ribosomal subunit, where it forms part of the central protuberance. This Clostridium botulinum (strain Langeland / NCTC 10281 / Type F) protein is Large ribosomal subunit protein uL18.